The sequence spans 450 residues: UDP-N-acetylmuramoylalanine--D-glutamate ligase (450 aa).

119–125 (GSNGKTT) contributes to the ATP binding site.

It belongs to the MurCDEF family.

The protein localises to the cytoplasm. It carries out the reaction UDP-N-acetyl-alpha-D-muramoyl-L-alanine + D-glutamate + ATP = UDP-N-acetyl-alpha-D-muramoyl-L-alanyl-D-glutamate + ADP + phosphate + H(+). Its pathway is cell wall biogenesis; peptidoglycan biosynthesis. Its function is as follows. Cell wall formation. Catalyzes the addition of glutamate to the nucleotide precursor UDP-N-acetylmuramoyl-L-alanine (UMA). The sequence is that of UDP-N-acetylmuramoylalanine--D-glutamate ligase from Bacillus mycoides (strain KBAB4) (Bacillus weihenstephanensis).